Reading from the N-terminus, the 555-residue chain is MARVEL domain-containing protein 2 (555 aa).

Over residues 1-20 the composition is skewed to basic and acidic residues; the sequence is MSSSDARSRIRDRGYSEVPR. The disordered stretch occupies residues 1–71; that stretch reads MSSSDARSRI…FYSSDTEEPA (71 aa). The Cytoplasmic segment spans residues 1 to 191; it reads MSSSDARSRI…YMKSWAGLLR (191 aa). Residues 46 to 59 are compositionally biased toward pro residues; it reads PLPPPPLPLQPPFG. Residues Ser-117, Ser-121, and Ser-158 each carry the phosphoserine modification. The tract at residues 118–142 is disordered; sequence PPASPARANHHPYKDPSRGSQGTFN. Thr-163 is modified (phosphothreonine). Residues 185 to 364 enclose the MARVEL domain; that stretch reads SWAGLLRILG…SALVCLKLWR (180 aa). The helical transmembrane segment at 192-212 threads the bilayer; it reads ILGVVELLLGAGVFACVTAYI. Over 213-251 the chain is Extracellular; sequence HKDNEWYNLFGYTQPYGMGGLGSLGNTYGGYYYSGPKTP. The helical transmembrane segment at 252–272 threads the bilayer; sequence FVLVVAGLAWITTIIILVLGM. Residues 273 to 288 lie on the Cytoplasmic side of the membrane; that stretch reads SMYYRTILLDSNWWPL. Residues 289-309 form a helical membrane-spanning segment; the sequence is TEFGVNVALFILYMAAAIVYV. At 310–338 the chain is on the extracellular side; the sequence is NDTNRGGLCYYPLFNTPMNAMFCRVEGGQ. A helical membrane pass occupies residues 339 to 359; the sequence is IAAMIFLFVTMIVYLVSALVC. Residues 360–555 lie on the Cytoplasmic side of the membrane; that stretch reads LKLWRHEAAR…VMNWDTQGYP (196 aa). At Ser-384 the chain carries Phosphoserine. Lys-408 is covalently cross-linked (Glycyl lysine isopeptide (Lys-Gly) (interchain with G-Cter in ubiquitin)). One can recognise an OCEL domain in the interval 437-548; sequence PDYVAKYPVI…RIQEYDKVMN (112 aa). The stretch at 521 to 545 forms a coiled coil; sequence EKKERCDYLKNKLSHIKQRIQEYDK.

The protein belongs to the ELL/occludin family. Interacts with TJP1. Interacts with the ubiquitin ligase ITCH. Interacts (via C-terminal cytoplasmic domain) with LSR (via the cytoplasmic domain), ILDR1 and ILDR2; the interaction is required to recruit MARVELD2 to tricellular contacts. In terms of processing, ubiquitinated by ITCH; but this ubiquitination does not lead to proteasomal degradation. Polyubiquitinated at Lys-408 via 'Lys-63'-linked ubiquitin chains; deubiquitinated by USP53. Post-translationally, phosphorylated. As to expression, detected in small intestine, stomach and kidney, in epithelial cells. Detected in pancreas, retina and lung, and in stria vascularis, utricle and the organ of Conti in the inner ear (at protein level). Predominantly detected in small intestine, lung and kidney, with lower levels in liver, testis and brain. In colon, expressed in the entire crypts.

It is found in the cell membrane. The protein resides in the cell junction. The protein localises to the tight junction. In terms of biological role, plays a role in the formation of tricellular tight junctions and of epithelial barriers. Required for normal hearing via its role in the separation of the endolymphatic and perilymphatic spaces of the organ of Corti in the inner ear, and for normal survival of hair cells in the organ of Corti. This is MARVEL domain-containing protein 2 from Mus musculus (Mouse).